We begin with the raw amino-acid sequence, 338 residues long: Mitoferrin-1 (338 aa).

The segment at 1 to 42 (MELRSGSVGSQAVARRMDGDSRDGGGGKDATGSEDYENLPTS) is disordered. The segment covering 15 to 26 (RRMDGDSRDGGG) has biased composition (basic and acidic residues). 3 Solcar repeats span residues 43 to 131 (ASVS…MKRT), 141 to 225 (NSHL…LQEQ), and 232 to 326 (YNPQ…FKYF). The next 6 helical transmembrane spans lie at 45 to 64 (VSTH…SVMY), 106 to 125 (GVNV…FACY), 143 to 162 (HLAN…AVMN), 200 to 219 (SYTT…FITY), 234 to 253 (PQSH…AATT), and 301 to 320 (GIQA…WSVY).

The protein belongs to the mitochondrial carrier (TC 2.A.29) family. In terms of assembly, interacts with ACB10; this interaction stabilizes SLC25A37 and enhances the function of SLC25A37 to import mitochondrial iron during erythroid differentiation.

It localises to the mitochondrion inner membrane. The enzyme catalyses Fe(2+)(in) = Fe(2+)(out). Functionally, mitochondrial iron transporter that specifically mediates iron uptake in developing erythroid cells, thereby playing an essential role in heme biosynthesis. The protein is Mitoferrin-1 (SLC25A37) of Homo sapiens (Human).